The primary structure comprises 159 residues: Ribosomal RNA large subunit methyltransferase H (159 aa).

S-adenosyl-L-methionine is bound by residues Leu76, Gly108, and 127 to 132; that span reads FSKMTL.

It belongs to the RNA methyltransferase RlmH family. In terms of assembly, homodimer.

Its subcellular location is the cytoplasm. It carries out the reaction pseudouridine(1915) in 23S rRNA + S-adenosyl-L-methionine = N(3)-methylpseudouridine(1915) in 23S rRNA + S-adenosyl-L-homocysteine + H(+). In terms of biological role, specifically methylates the pseudouridine at position 1915 (m3Psi1915) in 23S rRNA. This Bacillus cytotoxicus (strain DSM 22905 / CIP 110041 / 391-98 / NVH 391-98) protein is Ribosomal RNA large subunit methyltransferase H.